Here is a 142-residue protein sequence, read N- to C-terminus: Ribosome-binding factor A (142 aa).

A disordered region spans residues 119 to 142 (EAKQKQHGVETDAEQGDTKEEGDK).

This sequence belongs to the RbfA family. Monomer. Binds 30S ribosomal subunits, but not 50S ribosomal subunits or 70S ribosomes.

Its subcellular location is the cytoplasm. Its function is as follows. One of several proteins that assist in the late maturation steps of the functional core of the 30S ribosomal subunit. Associates with free 30S ribosomal subunits (but not with 30S subunits that are part of 70S ribosomes or polysomes). Required for efficient processing of 16S rRNA. May interact with the 5'-terminal helix region of 16S rRNA. This Shewanella pealeana (strain ATCC 700345 / ANG-SQ1) protein is Ribosome-binding factor A.